We begin with the raw amino-acid sequence, 667 residues long: MSQENSNVPALKRTESKYKIGRVKSLPTVQIDEKTGDSYIELAPRSEGKIYGCTTFQGNYKEEEKLGQGTFGEVYKGLHLQTQRKVAMKRIIVNQENDLFPITAQREITILKRLNHKNIIKLLEMVYDFPPESNNKDYAQFNQNNSANPPAVPKKFFYMILPYMVADLSGILHNPRIELKMADIKNMMKQILEGVNFIHCSKFMHRDIKTANLLIDHNGVLKLADFGLARQYYGSPPNIKFPGSAGSGAKYTSVVVTRWYRAPELVLGDKYYTTAVDIWGVGCVFAEFFEKKPILQGKTDIDQGHVIFKLMGTPDERTWELAKYLPGAELTKTEYKSTIDERFGKHLTPTGLSFLKGLLALDPYKRLTAMSAMKHPFFQEEPLAADRLTLPCEESHEADIKRYKEELHEAMSQKGPSAPPGHIKEATPSPAKFEKKSGIKREQPYQSNQKNDQYPIKRQKFNQNPSVPHPQPKANRYGGSSLPSGPKYGRYEGNNHSGSLRNRITPSNMGTHSNPRAENMGSKPYQSEGRYSSNEDRKNGYNRGYSSSVNSRYNNRAAFNETEDQSITTTTLNRYRHKGYHDNNQSQTRLQGHSSLPGKPTSKYNSTQTNIPYRRTEIPNPNEYNASKLGSQDTKKNDYPKHSETQKQQNNEEKKIHSEQKDIADLY.

A Protein kinase domain is found at 60–378 (YKEEEKLGQG…AMSAMKHPFF (319 aa)). ATP is bound by residues 66–74 (LGQGTFGEV) and Lys89. The Proton acceptor role is filled by Asp207. Residues 408-667 (HEAMSQKGPS…SEQKDIADLY (260 aa)) are disordered. Residues 432-443 (KFEKKSGIKREQ) show a composition bias toward basic and acidic residues. Residues 494–516 (NNHSGSLRNRITPSNMGTHSNPR) show a composition bias toward polar residues. Residues 541–556 (YNRGYSSSVNSRYNNR) are compositionally biased toward low complexity. 3 stretches are compositionally biased toward polar residues: residues 582-594 (DNNQSQTRLQGHS), 602-611 (SKYNSTQTNI), and 622-632 (NEYNASKLGSQ). Basic and acidic residues predominate over residues 633–667 (DTKKNDYPKHSETQKQQNNEEKKIHSEQKDIADLY).

Belongs to the protein kinase superfamily. CMGC Ser/Thr protein kinase family. CDC2/CDKX subfamily.

The protein localises to the nucleus. The catalysed reaction is L-seryl-[protein] + ATP = O-phospho-L-seryl-[protein] + ADP + H(+). It carries out the reaction L-threonyl-[protein] + ATP = O-phospho-L-threonyl-[protein] + ADP + H(+). It catalyses the reaction [DNA-directed RNA polymerase] + ATP = phospho-[DNA-directed RNA polymerase] + ADP + H(+). In terms of biological role, serine/threonine-protein kinase involved in transcription regulation. Phosphorylates the UBC2/RAD6 ubiquitin-conjugating enzyme (E2), leading to monoubiquitination of histone H2B and the silencing of telomeric-associated genes. Also required for histone H3 methylation. Necessary for the recovery from pheromone-induced growth arrest in the cell cycle G1 phase. This Candida glabrata (strain ATCC 2001 / BCRC 20586 / JCM 3761 / NBRC 0622 / NRRL Y-65 / CBS 138) (Yeast) protein is Serine/threonine-protein kinase BUR1 (BUR1).